The primary structure comprises 173 residues: C-phycocyanin beta subunit (173 aa).

Asn-73 is subject to N4-methylasparagine. 2 residues coordinate (2R,3E)-phycocyanobilin: Cys-83 and Cys-154.

The protein belongs to the phycobiliprotein family. Heterodimer of an alpha and a beta subunit. Heterodimers further assemble into trimers and the trimers into hexamers. Contains two covalently linked bilin chromophores.

The protein localises to the cellular thylakoid membrane. Its function is as follows. Light-harvesting photosynthetic bile pigment-protein from the phycobiliprotein complex (phycobilisome, PBS). Phycocyanin is the major phycobiliprotein in the PBS rod. The protein is C-phycocyanin beta subunit (cpcB) of Mastigocladus laminosus (Fischerella sp.).